The sequence spans 144 residues: SVVKSEDFSLPAYVDRRDHPLPEVAHVKLLSASQKALKENEKAAWSSLSMDEKVELYRIKFKESFAEMNRGSNEWKTVVGGAMFFIGFTALIIMWQKHYVYGPLPQTFDKEWVGKQTKRMLDMKVNPIQGLASKWDYEKNEWKK.

At 1-73 the chain is on the mitochondrial matrix side; that stretch reads SVVKSEDFSL…SFAEMNRGSN (73 aa). At K4 the chain carries N6-acetyllysine; alternate. K4 is modified (N6-succinyllysine; alternate). At K28 the chain carries N6-acetyllysine. Phosphoserine occurs at positions 31 and 33. K35 is modified (N6-acetyllysine; alternate). The residue at position 35 (K35) is an N6-succinyllysine; alternate. At K42 the chain carries N6-acetyllysine. The chain crosses the membrane as a helical span at residues 74-99; that stretch reads EWKTVVGGAMFFIGFTALIIMWQKHY. Residues 100–144 lie on the Mitochondrial intermembrane side of the membrane; that stretch reads VYGPLPQTFDKEWVGKQTKRMLDMKVNPIQGLASKWDYEKNEWKK.

Belongs to the cytochrome c oxidase IV family. As to quaternary structure, component of the cytochrome c oxidase (complex IV, CIV), a multisubunit enzyme composed of 14 subunits. The complex is composed of a catalytic core of 3 subunits MT-CO1, MT-CO2 and MT-CO3, encoded in the mitochondrial DNA, and 11 supernumerary subunits COX4I, COX5A, COX5B, COX6A, COX6B, COX6C, COX7A, COX7B, COX7C, COX8 and NDUFA4, which are encoded in the nuclear genome. The complex exists as a monomer or a dimer and forms supercomplexes (SCs) in the inner mitochondrial membrane with NADH-ubiquinone oxidoreductase (complex I, CI) and ubiquinol-cytochrome c oxidoreductase (cytochrome b-c1 complex, complex III, CIII), resulting in different assemblies (supercomplex SCI(1)III(2)IV(1) and megacomplex MCI(2)III(2)IV(2)). Interacts with PHB2; the interaction decreases in absence of SPHK2. Interacts with AFG1L. Interacts with ABCB7; this interaction allows the regulation of cellular iron homeostasis and cellular reactive oxygen species (ROS) levels in cardiomyocytes. Interacts with FLVCR2; this interaction occurs in the absence of heme and is disrupted upon heme binding. Interacts with IRGC.

The protein localises to the mitochondrion inner membrane. It functions in the pathway energy metabolism; oxidative phosphorylation. Component of the cytochrome c oxidase, the last enzyme in the mitochondrial electron transport chain which drives oxidative phosphorylation. The respiratory chain contains 3 multisubunit complexes succinate dehydrogenase (complex II, CII), ubiquinol-cytochrome c oxidoreductase (cytochrome b-c1 complex, complex III, CIII) and cytochrome c oxidase (complex IV, CIV), that cooperate to transfer electrons derived from NADH and succinate to molecular oxygen, creating an electrochemical gradient over the inner membrane that drives transmembrane transport and the ATP synthase. Cytochrome c oxidase is the component of the respiratory chain that catalyzes the reduction of oxygen to water. Electrons originating from reduced cytochrome c in the intermembrane space (IMS) are transferred via the dinuclear copper A center (CU(A)) of subunit 2 and heme A of subunit 1 to the active site in subunit 1, a binuclear center (BNC) formed by heme A3 and copper B (CU(B)). The BNC reduces molecular oxygen to 2 water molecules using 4 electrons from cytochrome c in the IMS and 4 protons from the mitochondrial matrix. The chain is Cytochrome c oxidase subunit 4 isoform 1, mitochondrial (COX4I1) from Hylobates agilis (Agile gibbon).